Reading from the N-terminus, the 84-residue chain is RNA-binding protein SAHV_0542 (84 aa).

This sequence belongs to the eukaryotic ribosomal protein eL8 family.

The polypeptide is RNA-binding protein SAHV_0542 (Staphylococcus aureus (strain Mu3 / ATCC 700698)).